We begin with the raw amino-acid sequence, 285 residues long: Methanethiol S-methyltransferase 1 (285 aa).

5 helical membrane-spanning segments follow: residues Ala55 to Val75, Ala88 to Met108, Leu132 to Ile152, Val162 to Ile182, and Phe224 to Val244.

This sequence belongs to the nurim family.

The protein resides in the membrane. It catalyses the reaction methanethiol + S-adenosyl-L-methionine = dimethyl sulfide + S-adenosyl-L-homocysteine + H(+). Functionally, catalyzes the methylation of methanethiol (MeSH) to yield dimethylsulphide (DMS). The protein is Methanethiol S-methyltransferase 1 of Bradyrhizobium diazoefficiens (strain JCM 10833 / BCRC 13528 / IAM 13628 / NBRC 14792 / USDA 110).